The chain runs to 161 residues: 6,7-dimethyl-8-ribityllumazine synthase (161 aa).

5-amino-6-(D-ribitylamino)uracil is bound by residues W31, 63–65 (SFE), and 85–87 (VVI). Residue 90 to 91 (GT) coordinates (2S)-2-hydroxy-3-oxobutyl phosphate. H93 serves as the catalytic Proton donor. F118 is a binding site for 5-amino-6-(D-ribitylamino)uracil. A (2S)-2-hydroxy-3-oxobutyl phosphate-binding site is contributed by R132.

It belongs to the DMRL synthase family.

The catalysed reaction is (2S)-2-hydroxy-3-oxobutyl phosphate + 5-amino-6-(D-ribitylamino)uracil = 6,7-dimethyl-8-(1-D-ribityl)lumazine + phosphate + 2 H2O + H(+). It functions in the pathway cofactor biosynthesis; riboflavin biosynthesis; riboflavin from 2-hydroxy-3-oxobutyl phosphate and 5-amino-6-(D-ribitylamino)uracil: step 1/2. Functionally, catalyzes the formation of 6,7-dimethyl-8-ribityllumazine by condensation of 5-amino-6-(D-ribitylamino)uracil with 3,4-dihydroxy-2-butanone 4-phosphate. This is the penultimate step in the biosynthesis of riboflavin. This is 6,7-dimethyl-8-ribityllumazine synthase from Paenarthrobacter aurescens (strain TC1).